The sequence spans 398 residues: Acetate kinase (398 aa).

A Mg(2+)-binding site is contributed by N8. K15 lines the ATP pocket. Substrate is bound at residue R90. D147 (proton donor/acceptor) is an active-site residue. Residues 207-211 (HIGAG), 282-284 (DMR), and 330-334 (GVGEN) contribute to the ATP site. E383 lines the Mg(2+) pocket.

Belongs to the acetokinase family. Homodimer. The cofactor is Mg(2+). Requires Mn(2+) as cofactor.

It is found in the cytoplasm. It catalyses the reaction acetate + ATP = acetyl phosphate + ADP. It functions in the pathway metabolic intermediate biosynthesis; acetyl-CoA biosynthesis; acetyl-CoA from acetate: step 1/2. Functionally, catalyzes the formation of acetyl phosphate from acetate and ATP. Can also catalyze the reverse reaction. The protein is Acetate kinase of Limosilactobacillus fermentum (strain NBRC 3956 / LMG 18251) (Lactobacillus fermentum).